The following is a 138-amino-acid chain: Basic phospholipase A2 homolog promutoxin (138 aa).

Residues 1–16 (MRTLWIMAVLLLGVEG) form the signal peptide. Intrachain disulfides connect Cys42-Cys132, Cys44-Cys60, Cys59-Cys112, Cys65-Cys138, Cys66-Cys105, Cys73-Cys98, and Cys91-Cys103. The tract at residues 122–133 (KKHRVTMKFLCK) is important for membrane-damaging activities in eukaryotes and bacteria; heparin-binding.

This sequence belongs to the phospholipase A2 family. Group II subfamily. R49 sub-subfamily. As to quaternary structure, homodimer; non-covalently linked. In terms of tissue distribution, expressed by the venom gland.

The protein resides in the secreted. In terms of biological role, snake venom phospholipase A2 homolog that lacks enzymatic activity. Exhibits potent myotoxicity causing myonecrosis and edema in the gastrocnemius muscle of mice. Is also able to stimulate the release of IL12 (IL12A-IL12B), TNF-alpha (TNF), IL6 and IL1-beta (IL1B) from human monocytes, and induce IL2, TNFalpha and IL6 release from T-cells. A model of myotoxic mechanism has been proposed: an apo Lys49-PLA2 is activated by the entrance of a hydrophobic molecule (e.g. fatty acid) at the hydrophobic channel of the protein leading to a reorientation of a monomer. This reorientation causes a transition between 'inactive' to 'active' states, causing alignment of C-terminal and membrane-docking sites (MDoS) side-by-side and putting the membrane-disruption sites (MDiS) in the same plane, exposed to solvent and in a symmetric position for both monomers. The MDoS region stabilizes the toxin on membrane by the interaction of charged residues with phospholipid head groups. Subsequently, the MDiS region destabilizes the membrane with penetration of hydrophobic residues. This insertion causes a disorganization of the membrane, allowing an uncontrolled influx of ions (i.e. calcium and sodium), and eventually triggering irreversible intracellular alterations and cell death. This chain is Basic phospholipase A2 homolog promutoxin, found in Protobothrops mucrosquamatus (Taiwan habu).